A 531-amino-acid chain; its full sequence is UDP-glucuronosyltransferase 2B13 (531 aa).

The signal sequence occupies residues 1 to 24; sequence MPVKCISVLLLLLQLSCCFSSGSC. 3 N-linked (GlcNAc...) asparagine glycosylation sites follow: N69, N101, and N317. The chain crosses the membrane as a helical span at residues 495–511; it reads VIGFLLACVAITTYLIV.

It belongs to the UDP-glycosyltransferase family.

The protein resides in the microsome membrane. It is found in the endoplasmic reticulum membrane. The catalysed reaction is glucuronate acceptor + UDP-alpha-D-glucuronate = acceptor beta-D-glucuronoside + UDP + H(+). In terms of biological role, UDPGT is of major importance in the conjugation and subsequent elimination of potentially toxic xenobiotics and endogenous compounds. Acts on small phenolic agents such as 2-beta-naphthol and 4-methylumbelliferone as well as bulky phenolic compounds like 2-hydroxy- and 4-hydroxybiphenyl. In contrast to 2B16 it is active toward octylgallate. In Oryctolagus cuniculus (Rabbit), this protein is UDP-glucuronosyltransferase 2B13 (UGT2B13).